A 357-amino-acid chain; its full sequence is Alanine racemase (357 aa).

Lys33 serves as the catalytic Proton acceptor; specific for D-alanine. Residue Lys33 is modified to N6-(pyridoxal phosphate)lysine. Position 129 (Arg129) interacts with substrate. The active-site Proton acceptor; specific for L-alanine is Tyr253. Met301 lines the substrate pocket.

This sequence belongs to the alanine racemase family. Requires pyridoxal 5'-phosphate as cofactor.

It catalyses the reaction L-alanine = D-alanine. It participates in amino-acid biosynthesis; D-alanine biosynthesis; D-alanine from L-alanine: step 1/1. Functionally, catalyzes the interconversion of L-alanine and D-alanine. May also act on other amino acids. This is Alanine racemase (alr) from Pseudomonas syringae pv. syringae (strain B728a).